The primary structure comprises 391 residues: Secreted aspartic protease 1 (391 aa).

The first 18 residues, 1 to 18, serve as a signal peptide directing secretion; that stretch reads MFLKNIFIALAIALLVDA. Residues 19–50 constitute a propeptide, activation peptide; the sequence is SPAKRSPGFVTLDFDVIKTPVNATGQEGKVKR. Residue Asn-40 is glycosylated (N-linked (GlcNAc...) asparagine). Positions 64-377 constitute a Peptidase A1 domain; the sequence is YAADITIGSN…DLDDDKISLA (314 aa). Asp-82 is a catalytic residue. Pepstatin A is bound at residue 82–84; the sequence is DTG. A disulfide bond links Cys-97 and Cys-109. Position 135 to 136 (135 to 136) interacts with pepstatin A; the sequence is GD. The Zn(2+) site is built by Asp-241 and Asp-263. Asp-267 is an active-site residue. Pepstatin A is bound at residue 267 to 271; the sequence is DSGTT. A disulfide bridge connects residues Cys-305 and Cys-343.

The protein belongs to the peptidase A1 family. Monomer.

The protein localises to the secreted. The catalysed reaction is Preferential cleavage at the carboxyl of hydrophobic amino acids, but fails to cleave 15-Leu-|-Tyr-16, 16-Tyr-|-Leu-17 and 24-Phe-|-Phe-25 of insulin B chain. Activates trypsinogen, and degrades keratin.. With respect to regulation, inhibited by pepstatin A analogs and squash aspartic peptidase inhibitor (SQAPI). Secreted aspartic peptidases (SAPs) are a group of ten acidic hydrolases considered as key virulence factors. These enzymes supply the fungus with nutrient amino acids as well as are able to degrade the selected host's proteins involved in the immune defense. Induces host inflammatory cytokine production in a proteolytic activity-independent way. Plays a role in tissue damage during superficial infection. Moreover, acts toward human hemoglobin though limited proteolysis to generate a variety of antimicrobial hemocidins, enabling to compete with the other microorganisms of the same physiological niche using the microbicidal peptides generated from the host protein. Its function is as follows. Plays a key role in defense against host by cleaving histatin-5 (Hst 5), a peptide from human saliva that carries out fungicidal activity. The cleavage rate decreases in an order of SAP2 &gt; SAP9 &gt; SAP3 &gt; SAP7 &gt; SAP4 &gt; SAP1 &gt; SAP8. The first cleavage occurs between residues 'Lys-17' and 'His-18' of Hst 5, giving DSHAKRHHGYKRKFHEK and HHSHRGY peptides. Further fragmentation by SAP1 results in AKRHHGYKRKFHEK and AKRHHGY products. This Candida albicans (strain SC5314 / ATCC MYA-2876) (Yeast) protein is Secreted aspartic protease 1.